A 104-amino-acid chain; its full sequence is Putative ankyrin repeat protein L677 (104 aa).

3 ANK repeats span residues 16-43, 44-73, and 75-102; these read FNKSSLEIACIENDIGTVKKIINLNPNL, DISHCLNLAIESKNYQIVKFLLKKNISNSV, and LEAYDCACINGKISIMELLIQYLNNKSI.

This is Putative ankyrin repeat protein L677 from Acanthamoeba polyphaga (Amoeba).